Reading from the N-terminus, the 428-residue chain is MKRGGRDSDRNSSEEGTAEKSKKLRTTNEHSQTCDWGNLLQDIILQVFKYLPLLDRAHASQVCRNWNQVFHMPDLWRCFEFELNQPATSYLKATHPELIKQIIKRHSNHLQYVSFKVDSSKESAEAACDILSQLVNCSLKTLGLISTARPSFMDLPKSHFISALTVVFVNSKSLSSLKIDDTPVDDPSLKVLVANNSDTLKLLKMSSCPHVSPAGILCVADQCHGLRELALNYHLLSDELLLALSSEKHVRLEHLRIDVVSENPGQTHFHTIQKSSWDAFIRHSPKVNLVMYFFLYEEEFDPFFRYEIPATHLYFGRSVSKDVLGRVGMTCPRLVELVVCANGLRPLDEELIRIAERCKNLSAIGLGECEVSCSAFVEFVKMCGGRLSQLSIMEEVLIPDQKYSLEQIHWEVSKHLGRVWFPDMMPTW.

A compositionally biased stretch (basic and acidic residues) spans 1-21 (MKRGGRDSDRNSSEEGTAEKS). The disordered stretch occupies residues 1-27 (MKRGGRDSDRNSSEEGTAEKSKKLRTT). One can recognise an F-box domain in the interval 34–81 (CDWGNLLQDIILQVFKYLPLLDRAHASQVCRNWNQVFHMPDLWRCFEF). LRR repeat units follow at residues 119 to 146 (SSKE…GLIS), 181 to 207 (DTPV…KMSS), 208 to 233 (CPHV…ALNY), 234 to 259 (HLLS…RIDV), 316 to 341 (GRSV…VVCA), 343 to 368 (GLRP…GLGE), and 369 to 394 (CEVS…SIME).

In terms of assembly, part of the SCF (SKP1-CUL1-F-box) E3 ubiquitin-protein ligase complex SCF(FBXL3) composed of CUL1, SKP1, RBX1 and FBXL3. Interacts with CRY1 and CRY2 (phosphorylated). Interacts with HDAC3. Interacts with KDM8. In terms of processing, undergoes autophagy-mediated degradation in the liver in a time-dependent manner. As to expression, widely expressed.

The protein localises to the nucleus. It localises to the cytoplasm. It functions in the pathway protein modification; protein ubiquitination. Its function is as follows. Substrate-recognition component of the SCF(FBXL3) E3 ubiquitin ligase complex involved in circadian rhythm function. Plays a key role in the maintenance of both the speed and the robustness of the circadian clock oscillation. The SCF(FBXL3) complex mainly acts in the nucleus and mediates ubiquitination and subsequent degradation of CRY1 and CRY2. Activity of the SCF(FBXL3) complex is counteracted by the SCF(FBXL21) complex. The sequence is that of F-box/LRR-repeat protein 3 (FBXL3) from Homo sapiens (Human).